Consider the following 299-residue polypeptide: GTPase Era (299 aa).

Positions 5 to 175 (RSGFVCLVGR…IDVLAAALPP (171 aa)) constitute an Era-type G domain. A G1 region spans residues 13–20 (GRPNTGKS). 13–20 (GRPNTGKS) contributes to the GTP binding site. Residues 39–43 (QTTRH) are G2. The G3 stretch occupies residues 60 to 63 (DTPG). GTP contacts are provided by residues 60-64 (DTPGL) and 124-127 (TKID). Residues 124-127 (TKID) form a G4 region. The tract at residues 154–156 (VSA) is G5. A KH type-2 domain is found at 206-285 (VRDELPHSLA…YLDLRVKVAK (80 aa)).

Belongs to the TRAFAC class TrmE-Era-EngA-EngB-Septin-like GTPase superfamily. Era GTPase family. As to quaternary structure, monomer.

Its subcellular location is the cell envelope. It localises to the secreted. It is found in the cell wall. Exhibits GTPase activity. Binds RNA but is probably not involved in ribosome assembly in mycobacteria. The chain is GTPase Era from Mycobacterium avium (strain 104).